A 92-amino-acid polypeptide reads, in one-letter code: MAKRTKKVGIVGKYGTRYGASLRKMVKKIEISQHAKYTCSFCGKTKMKRRAVGIWHCGSCMKTVAGGAWTYNTTSAVTVKSAIRRLKELKDQ.

Cys39, Cys42, Cys57, and Cys60 together coordinate Zn(2+). A C4-type zinc finger spans residues 39–60; sequence CSFCGKTKMKRRAVGIWHCGSC.

The protein belongs to the eukaryotic ribosomal protein eL43 family. Component of the large ribosomal subunit.

It localises to the cytoplasm. Component of the large ribosomal subunit. The ribosome is a large ribonucleoprotein complex responsible for the synthesis of proteins in the cell. The sequence is that of Large ribosomal subunit protein eL43 (Rpl37a) from Mus musculus (Mouse).